Reading from the N-terminus, the 491-residue chain is Aspartyl/glutamyl-tRNA(Asn/Gln) amidotransferase subunit B (491 aa).

Belongs to the GatB/GatE family. GatB subfamily. Heterotrimer of A, B and C subunits.

The enzyme catalyses L-glutamyl-tRNA(Gln) + L-glutamine + ATP + H2O = L-glutaminyl-tRNA(Gln) + L-glutamate + ADP + phosphate + H(+). It catalyses the reaction L-aspartyl-tRNA(Asn) + L-glutamine + ATP + H2O = L-asparaginyl-tRNA(Asn) + L-glutamate + ADP + phosphate + 2 H(+). Its function is as follows. Allows the formation of correctly charged Asn-tRNA(Asn) or Gln-tRNA(Gln) through the transamidation of misacylated Asp-tRNA(Asn) or Glu-tRNA(Gln) in organisms which lack either or both of asparaginyl-tRNA or glutaminyl-tRNA synthetases. The reaction takes place in the presence of glutamine and ATP through an activated phospho-Asp-tRNA(Asn) or phospho-Glu-tRNA(Gln). This Paraburkholderia phymatum (strain DSM 17167 / CIP 108236 / LMG 21445 / STM815) (Burkholderia phymatum) protein is Aspartyl/glutamyl-tRNA(Asn/Gln) amidotransferase subunit B.